A 460-amino-acid polypeptide reads, in one-letter code: Asparagine--tRNA ligase (460 aa).

This sequence belongs to the class-II aminoacyl-tRNA synthetase family. As to quaternary structure, homodimer.

Its subcellular location is the cytoplasm. It catalyses the reaction tRNA(Asn) + L-asparagine + ATP = L-asparaginyl-tRNA(Asn) + AMP + diphosphate + H(+). In Picosynechococcus sp. (strain ATCC 27264 / PCC 7002 / PR-6) (Agmenellum quadruplicatum), this protein is Asparagine--tRNA ligase.